The following is a 65-amino-acid chain: Small ribosomal subunit protein bS21 (65 aa).

The tract at residues 45–65 is disordered; sequence GRLKRSRSRRRAQRANEERNS. Basic residues predominate over residues 48–57; the sequence is KRSRSRRRAQ.

The protein belongs to the bacterial ribosomal protein bS21 family.

This chain is Small ribosomal subunit protein bS21, found in Pelodictyon phaeoclathratiforme (strain DSM 5477 / BU-1).